The sequence spans 78 residues: MPADIPKSVVQKLVFFTAAMIICPVATFFICQYLFSNNAIISGGVSALVANIVLIGYVVAAFMEDTTEQEPEETKKSR.

Residues 1 to 14 are Cytoplasmic-facing; that stretch reads MPADIPKSVVQKLV. The helical transmembrane segment at 15–35 threads the bilayer; sequence FFTAAMIICPVATFFICQYLF. At 36 to 38 the chain is on the lumenal side; that stretch reads SNN. A helical membrane pass occupies residues 39-59; the sequence is AIISGGVSALVANIVLIGYVV. Over 60–78 the chain is Cytoplasmic; the sequence is AAFMEDTTEQEPEETKKSR. Positions 75 to 78 match the Prevents secretion from ER motif; that stretch reads KKSR.

It belongs to the VMA21 family.

It localises to the endoplasmic reticulum membrane. Its subcellular location is the endoplasmic reticulum-Golgi intermediate compartment membrane. It is found in the cytoplasmic vesicle. The protein resides in the COPII-coated vesicle membrane. Required for the assembly of the V0 complex of the vacuolar ATPase (V-ATPase) in the endoplasmic reticulum. In Debaryomyces hansenii (strain ATCC 36239 / CBS 767 / BCRC 21394 / JCM 1990 / NBRC 0083 / IGC 2968) (Yeast), this protein is Vacuolar ATPase assembly integral membrane protein VMA21.